Reading from the N-terminus, the 806-residue chain is Glycerol-3-phosphate acyltransferase (806 aa).

An HXXXXD motif motif is present at residues 305–310; sequence CHRSHM.

This sequence belongs to the GPAT/DAPAT family.

The protein resides in the cell inner membrane. The enzyme catalyses sn-glycerol 3-phosphate + an acyl-CoA = a 1-acyl-sn-glycero-3-phosphate + CoA. It functions in the pathway phospholipid metabolism; CDP-diacylglycerol biosynthesis; CDP-diacylglycerol from sn-glycerol 3-phosphate: step 1/3. This is Glycerol-3-phosphate acyltransferase from Salmonella paratyphi A (strain ATCC 9150 / SARB42).